We begin with the raw amino-acid sequence, 447 residues long: Cysteine--tRNA ligase (447 aa).

Residue cysteine 28 coordinates Zn(2+). The short motif at 30-40 is the 'HIGH' region element; it reads PTVYNYIHIGN. The Zn(2+) site is built by cysteine 211, histidine 236, and glutamate 240. The short motif at 268–272 is the 'KMSKS' region element; the sequence is KMSKS. Lysine 271 lines the ATP pocket.

Belongs to the class-I aminoacyl-tRNA synthetase family. As to quaternary structure, monomer. It depends on Zn(2+) as a cofactor.

Its subcellular location is the cytoplasm. The catalysed reaction is tRNA(Cys) + L-cysteine + ATP = L-cysteinyl-tRNA(Cys) + AMP + diphosphate. The polypeptide is Cysteine--tRNA ligase (Streptococcus agalactiae serotype V (strain ATCC BAA-611 / 2603 V/R)).